Here is a 388-residue protein sequence, read N- to C-terminus: Phosphoribosylformylglycinamidine cyclo-ligase, chloroplastic/mitochondrial (388 aa).

It belongs to the AIR synthase family.

The protein resides in the plastid. It is found in the chloroplast. It localises to the mitochondrion. It carries out the reaction 2-formamido-N(1)-(5-O-phospho-beta-D-ribosyl)acetamidine + ATP = 5-amino-1-(5-phospho-beta-D-ribosyl)imidazole + ADP + phosphate + H(+). It functions in the pathway purine metabolism; IMP biosynthesis via de novo pathway; 5-amino-1-(5-phospho-D-ribosyl)imidazole from N(2)-formyl-N(1)-(5-phospho-D-ribosyl)glycinamide: step 2/2. The sequence is that of Phosphoribosylformylglycinamidine cyclo-ligase, chloroplastic/mitochondrial (PUR5) from Vigna unguiculata (Cowpea).